The chain runs to 199 residues: uncharacterized protein (199 aa).

A G-patch domain is found at 112 to 160; the sequence is PKSLGYRVLSQYGWSPQGDTAGLGLENQGRRAPVRAFRVKNDTIGLGTK.

This is an uncharacterized protein from Schizosaccharomyces pombe (strain 972 / ATCC 24843) (Fission yeast).